Consider the following 63-residue polypeptide: Short neurotoxin 2 (63 aa).

Cystine bridges form between Cys-3–Cys-21, Cys-15–Cys-39, Cys-43–Cys-49, and Cys-50–Cys-55.

This sequence belongs to the three-finger toxin family. Short-chain subfamily. Orphan group XVIII sub-subfamily. Expressed by the venom gland.

It is found in the secreted. Functionally, blocks both the muscle-twitch response to nerve stimulation and the response to exogenous acetylcholine. The sequence is that of Short neurotoxin 2 from Bungarus fasciatus (Banded krait).